Here is a 512-residue protein sequence, read N- to C-terminus: Probable ubiquitin carboxyl-terminal hydrolase 3 (512 aa).

The interval 64–109 (TSKTKESEKSPKSWSAIAKKHVQGDSPVKKSHSVPVPSDRSEKKSF) is disordered. A USP domain is found at 133–511 (RGFINTGNIC…VAYLLFYTRR (379 aa)). Cys-142 serves as the catalytic Nucleophile. The active-site Proton acceptor is the His-453.

The protein belongs to the peptidase C19 family.

The enzyme catalyses Thiol-dependent hydrolysis of ester, thioester, amide, peptide and isopeptide bonds formed by the C-terminal Gly of ubiquitin (a 76-residue protein attached to proteins as an intracellular targeting signal).. This Schizosaccharomyces pombe (strain 972 / ATCC 24843) (Fission yeast) protein is Probable ubiquitin carboxyl-terminal hydrolase 3 (ubp3).